A 366-amino-acid polypeptide reads, in one-letter code: Chorismate synthase (366 aa).

Residues arginine 48 and arginine 54 each coordinate NADP(+). Residues 125–127, 238–239, glycine 278, 293–297, and arginine 319 each bind FMN; these read RSS, NA, and KPTSS.

It belongs to the chorismate synthase family. As to quaternary structure, homotetramer. Requires FMNH2 as cofactor.

The enzyme catalyses 5-O-(1-carboxyvinyl)-3-phosphoshikimate = chorismate + phosphate. It participates in metabolic intermediate biosynthesis; chorismate biosynthesis; chorismate from D-erythrose 4-phosphate and phosphoenolpyruvate: step 7/7. Catalyzes the anti-1,4-elimination of the C-3 phosphate and the C-6 proR hydrogen from 5-enolpyruvylshikimate-3-phosphate (EPSP) to yield chorismate, which is the branch point compound that serves as the starting substrate for the three terminal pathways of aromatic amino acid biosynthesis. This reaction introduces a second double bond into the aromatic ring system. The sequence is that of Chorismate synthase from Ralstonia pickettii (strain 12J).